The sequence spans 49 residues: MADNIILECTECGDRSYLSKKNKRKHPERLSLKKYCPVERRATLHRETK.

This sequence belongs to the bacterial ribosomal protein bL33 family.

The polypeptide is Large ribosomal subunit protein bL33 (Lactobacillus acidophilus (strain ATCC 700396 / NCK56 / N2 / NCFM)).